A 299-amino-acid chain; its full sequence is Homeobox protein Nkx-2.5 (299 aa).

The segment covering 90-119 has biased composition (basic and acidic residues); it reads KDPKDHKKDICPLQKTLEHDKREAEDPERP. Residues 90–128 form a disordered region; the sequence is KDPKDHKKDICPLQKTLEHDKREAEDPERPRQRKRRKPR. Positions 124–183 form a DNA-binding region, homeobox; it reads RRKPRVLFSQAQVYELERRFKQQKYLSAPERDHLANVLKLTSTQVKIWFQNRRYKCKRQR.

This sequence belongs to the NK-2 homeobox family. In terms of assembly, homodimer (via the homeobox); binds DNA as homodimer. Heart and gut tissue.

It is found in the nucleus. Functionally, transcription factor required for the development of the heart and the spleen. Implicated in commitment to and/or differentiation of the myocardial lineage. May regulate the expression of genes involved in cardiogenesis and play a role in the formation of gut and the pharyngeal region. Binds to the core DNA motif of promoter. The sequence is that of Homeobox protein Nkx-2.5 (nkx-2.5) from Xenopus laevis (African clawed frog).